Here is a 311-residue protein sequence, read N- to C-terminus: Ribosomal RNA small subunit methyltransferase H (311 aa).

Residues 34 to 36 (GGH), D54, F80, D104, and Q111 each bind S-adenosyl-L-methionine.

Belongs to the methyltransferase superfamily. RsmH family.

The protein resides in the cytoplasm. It catalyses the reaction cytidine(1402) in 16S rRNA + S-adenosyl-L-methionine = N(4)-methylcytidine(1402) in 16S rRNA + S-adenosyl-L-homocysteine + H(+). Specifically methylates the N4 position of cytidine in position 1402 (C1402) of 16S rRNA. This Teredinibacter turnerae (strain ATCC 39867 / T7901) protein is Ribosomal RNA small subunit methyltransferase H.